The primary structure comprises 431 residues: Enolase (431 aa).

(2R)-2-phosphoglycerate is bound at residue glutamine 166. Catalysis depends on glutamate 208, which acts as the Proton donor. Positions 245, 289, and 316 each coordinate Mg(2+). Residues lysine 341, arginine 370, serine 371, and lysine 392 each contribute to the (2R)-2-phosphoglycerate site. Lysine 341 functions as the Proton acceptor in the catalytic mechanism.

It belongs to the enolase family. It depends on Mg(2+) as a cofactor.

The protein resides in the cytoplasm. It localises to the secreted. Its subcellular location is the cell surface. The enzyme catalyses (2R)-2-phosphoglycerate = phosphoenolpyruvate + H2O. It participates in carbohydrate degradation; glycolysis; pyruvate from D-glyceraldehyde 3-phosphate: step 4/5. Functionally, catalyzes the reversible conversion of 2-phosphoglycerate (2-PG) into phosphoenolpyruvate (PEP). It is essential for the degradation of carbohydrates via glycolysis. The sequence is that of Enolase from Ruminiclostridium cellulolyticum (strain ATCC 35319 / DSM 5812 / JCM 6584 / H10) (Clostridium cellulolyticum).